A 635-amino-acid polypeptide reads, in one-letter code: Phosphatidylserine decarboxylase proenzyme 3 (635 aa).

The segment at 1-42 (MGNGNSTETKESRRSKMRKKIQNFRSRRRLSRPGSGSVSGLA) is disordered. A lipid anchor (N-myristoyl glycine) is attached at glycine 2. Residues 15 to 31 (SKMRKKIQNFRSRRRLS) are compositionally biased toward basic residues. Residues 22-147 (QNFRSRRRLS…VVQEPDSTCK (126 aa)) enclose the C2 domain. 2 consecutive EF-hand domains span residues 180 to 210 (AKRI…FGNV) and 211 to 246 (VAAN…QQEQ). Ca(2+) is bound by residues aspartate 188, aspartate 190, aspartate 192, lysine 194, glutamate 199, aspartate 224, asparagine 226, aspartate 228, and glutamate 235. Residues aspartate 442, histidine 498, and serine 586 each act as charge relay system; for autoendoproteolytic cleavage activity in the active site. Catalysis depends on serine 586, which acts as the Schiff-base intermediate with substrate; via pyruvic acid; for decarboxylase activity. Serine 586 is modified (pyruvic acid (Ser); by autocatalysis).

It belongs to the phosphatidylserine decarboxylase family. PSD-B subfamily. Eukaryotic type II sub-subfamily. In terms of assembly, heterodimer of a large membrane-associated beta subunit and a small pyruvoyl-containing alpha subunit. Pyruvate is required as a cofactor. In terms of processing, is synthesized initially as an inactive proenzyme. Formation of the active enzyme involves a self-maturation process in which the active site pyruvoyl group is generated from an internal serine residue via an autocatalytic post-translational modification. Two non-identical subunits are generated from the proenzyme in this reaction, and the pyruvate is formed at the N-terminus of the alpha chain, which is derived from the carboxyl end of the proenzyme. The autoendoproteolytic cleavage occurs by a canonical serine protease mechanism, in which the side chain hydroxyl group of the serine supplies its oxygen atom to form the C-terminus of the beta chain, while the remainder of the serine residue undergoes an oxidative deamination to produce ammonia and the pyruvoyl prosthetic group on the alpha chain. During this reaction, the Ser that is part of the protease active site of the proenzyme becomes the pyruvoyl prosthetic group, which constitutes an essential element of the active site of the mature decarboxylase. As to expression, expressed in roots, leaves, stems and flowers.

The protein resides in the endoplasmic reticulum membrane. It catalyses the reaction a 1,2-diacyl-sn-glycero-3-phospho-L-serine + H(+) = a 1,2-diacyl-sn-glycero-3-phosphoethanolamine + CO2. It functions in the pathway phospholipid metabolism; phosphatidylethanolamine biosynthesis; phosphatidylethanolamine from CDP-diacylglycerol: step 2/2. In terms of biological role, catalyzes the formation of phosphatidylethanolamine (PtdEtn) from phosphatidylserine (PtdSer). Plays a central role in phospholipid metabolism and in the interorganelle trafficking of phosphatidylserine. Contributes only to a minor proportion of PtdEtn production. The polypeptide is Phosphatidylserine decarboxylase proenzyme 3 (PSD3) (Arabidopsis thaliana (Mouse-ear cress)).